A 497-amino-acid polypeptide reads, in one-letter code: Putative aldehyde dehydrogenase AldA (497 aa).

213-219 lines the NAD(+) pocket; the sequence is GKGSESG. Active-site residues include Glu-257 and Cys-291.

It belongs to the aldehyde dehydrogenase family.

The catalysed reaction is an aldehyde + NAD(+) + H2O = a carboxylate + NADH + 2 H(+). The sequence is that of Putative aldehyde dehydrogenase AldA (aldA) from Staphylococcus epidermidis (strain ATCC 35984 / DSM 28319 / BCRC 17069 / CCUG 31568 / BM 3577 / RP62A).